Reading from the N-terminus, the 162-residue chain is MGLETEKADVQLFMDDDSYSHHSGVDYGDPEKFVDSGQDRDPHRLNSHLKVGFEDVIAEPMNMHSFDKVWICSHALFEISKYVIYKFLTVFLAIPLAFTAGILFATLSCLHIWIIMPFVKTCLMVLPSVQTIWRSVTDVIIAPLCTSIGRICSSVSLQVSHD.

At methionine 1–lysine 86 the chain is on the cytoplasmic side. A Phosphotyrosine; by SRC modification is found at tyrosine 19. Phosphoserine is present on residues serine 20 and serine 23. Residue tyrosine 27 is modified to Phosphotyrosine; by SRC. Serine 36 bears the Phosphoserine mark. The helical intramembrane region spans phenylalanine 87 to leucine 107. Residues serine 108–aspartate 162 lie on the Cytoplasmic side of the membrane.

Belongs to the caveolin family. Monomer or homodimer. Interacts with CAV1; the interaction forms a stable heterooligomeric complex that is required for targeting to lipid rafts and for caveolae formation. Tyrosine phosphorylated forms do not form heterooligomers with the Tyr-19-phosphorylated form existing as a monomer or dimer, and the Tyr-27-form as a monomer only. Interacts (tyrosine phosphorylated form) with the SH2 domain-containing proteins, RASA1, NCK1 and SRC. Interacts (tyrosine phosphorylated form) with INSR, the interaction (Tyr-27-phosphorylated form) is increased on insulin stimulation. Interacts (Tyr-19 phosphorylated form) with MAPK1 (phosphorylated form); the interaction, promoted by insulin, leads to nuclear location and MAPK1 activation. Interacts with STAT3; the interaction is increased on insulin-induced tyrosine phosphorylation leading to STAT activation. In terms of processing, phosphorylated on serine and tyrosine residues. CAV1 promotes phosphorylation on Ser-23 which then targets the complex to the plasma membrane, lipid rafts and caveolae. Phosphorylation on Ser-36 appears to modulate mitosis in endothelial cells. Phosphorylation on both Tyr-19 and Tyr-27 is required for insulin-induced 'Ser-727' phosphorylation of STAT3 and its activation. Phosphorylation on Tyr-19 is required for insulin-induced phosphorylation of MAPK1 and DNA binding of STAT3. Tyrosine phosphorylation is induced by both EGF and insulin (By. similarity).

The protein resides in the nucleus. It is found in the cytoplasm. It localises to the golgi apparatus membrane. Its subcellular location is the cell membrane. The protein localises to the membrane. The protein resides in the caveola. Its function is as follows. May act as a scaffolding protein within caveolar membranes. Interacts directly with G-protein alpha subunits and can functionally regulate their activity. Acts as an accessory protein in conjunction with CAV1 in targeting to lipid rafts and driving caveolae formation. The Ser-36 phosphorylated form has a role in modulating mitosis in endothelial cells. Positive regulator of cellular mitogenesis of the MAPK signaling pathway. Required for the insulin-stimulated nuclear translocation and activation of MAPK1 and STAT3, and the subsequent regulation of cell cycle progression. This Atelerix albiventris (Middle-African hedgehog) protein is Caveolin-2 (CAV2).